Reading from the N-terminus, the 270-residue chain is B3 domain-containing protein Os03g0212300 (270 aa).

2 consecutive DNA-binding regions (TF-B3) follow at residues 13–110 and 158–265; these read FEFF…FDET and VTLR…RKAD.

The protein localises to the nucleus. In Oryza sativa subsp. japonica (Rice), this protein is B3 domain-containing protein Os03g0212300.